We begin with the raw amino-acid sequence, 159 residues long: NADH-quinone oxidoreductase subunit I (159 aa).

4Fe-4S ferredoxin-type domains are found at residues 51–80 (RRYENGVERCIACKLCEAICPAQAIVIEAE) and 90–119 (TRYDIDMTKCIYCGLCQEACPVDAIVEGPN). The [4Fe-4S] cluster site is built by cysteine 60, cysteine 63, cysteine 66, cysteine 70, cysteine 99, cysteine 102, cysteine 105, and cysteine 109.

It belongs to the complex I 23 kDa subunit family. In terms of assembly, NDH-1 is composed of 14 different subunits. Subunits NuoA, H, J, K, L, M, N constitute the membrane sector of the complex. Requires [4Fe-4S] cluster as cofactor.

Its subcellular location is the cell inner membrane. It catalyses the reaction a quinone + NADH + 5 H(+)(in) = a quinol + NAD(+) + 4 H(+)(out). In terms of biological role, NDH-1 shuttles electrons from NADH, via FMN and iron-sulfur (Fe-S) centers, to quinones in the respiratory chain. The immediate electron acceptor for the enzyme in this species is believed to be ubiquinone. Couples the redox reaction to proton translocation (for every two electrons transferred, four hydrogen ions are translocated across the cytoplasmic membrane), and thus conserves the redox energy in a proton gradient. The protein is NADH-quinone oxidoreductase subunit I of Rickettsia canadensis (strain McKiel).